A 473-amino-acid polypeptide reads, in one-letter code: Photosystem II CP43 reaction center protein (473 aa).

The propeptide occupies 1–14 (MKTLYSLRRFYHVE). Residue T15 is modified to N-acetylthreonine. A Phosphothreonine modification is found at T15. Helical transmembrane passes span 69–93 (LFEV…PHLA), 134–155 (LLGP…KDRN), 178–200 (KALY…RKIT), 255–275 (KPFA…LSYS), and 291–312 (WFNN…ASQA). Residue E367 participates in [CaMn4O5] cluster binding. The chain crosses the membrane as a helical span at residues 447-471 (RARAAAAGFEKGIDRDFEPVLSMTP).

Belongs to the PsbB/PsbC family. PsbC subfamily. PSII is composed of 1 copy each of membrane proteins PsbA, PsbB, PsbC, PsbD, PsbE, PsbF, PsbH, PsbI, PsbJ, PsbK, PsbL, PsbM, PsbT, PsbX, PsbY, PsbZ, Psb30/Ycf12, at least 3 peripheral proteins of the oxygen-evolving complex and a large number of cofactors. It forms dimeric complexes. It depends on Binds multiple chlorophylls and provides some of the ligands for the Ca-4Mn-5O cluster of the oxygen-evolving complex. It may also provide a ligand for a Cl- that is required for oxygen evolution. PSII binds additional chlorophylls, carotenoids and specific lipids. as a cofactor.

It is found in the plastid. Its subcellular location is the chloroplast thylakoid membrane. Functionally, one of the components of the core complex of photosystem II (PSII). It binds chlorophyll and helps catalyze the primary light-induced photochemical processes of PSII. PSII is a light-driven water:plastoquinone oxidoreductase, using light energy to abstract electrons from H(2)O, generating O(2) and a proton gradient subsequently used for ATP formation. This chain is Photosystem II CP43 reaction center protein, found in Chloranthus spicatus (Chulantree).